Consider the following 367-residue polypeptide: Lipoyl synthase 2, chloroplastic (367 aa).

Cys-84, Cys-89, Cys-95, Cys-121, Cys-125, Cys-128, and Ser-336 together coordinate [4Fe-4S] cluster. The 222-residue stretch at 104–325 (GEGDGIATAT…KEYGESVGFR (222 aa)) folds into the Radical SAM core domain.

This sequence belongs to the radical SAM superfamily. Lipoyl synthase family. [4Fe-4S] cluster serves as cofactor.

It localises to the plastid. The protein resides in the chloroplast. It catalyses the reaction [[Fe-S] cluster scaffold protein carrying a second [4Fe-4S](2+) cluster] + N(6)-octanoyl-L-lysyl-[protein] + 2 oxidized [2Fe-2S]-[ferredoxin] + 2 S-adenosyl-L-methionine + 4 H(+) = [[Fe-S] cluster scaffold protein] + N(6)-[(R)-dihydrolipoyl]-L-lysyl-[protein] + 4 Fe(3+) + 2 hydrogen sulfide + 2 5'-deoxyadenosine + 2 L-methionine + 2 reduced [2Fe-2S]-[ferredoxin]. Its pathway is protein modification; protein lipoylation via endogenous pathway; protein N(6)-(lipoyl)lysine from octanoyl-[acyl-carrier-protein]: step 2/2. Its function is as follows. Catalyzes the radical-mediated insertion of two sulfur atoms into the C-6 and C-8 positions of the octanoyl moiety bound to the lipoyl domains of lipoate-dependent enzymes, thereby converting the octanoylated domains into lipoylated derivatives. The chain is Lipoyl synthase 2, chloroplastic from Zea mays (Maize).